The sequence spans 292 residues: 4-hydroxy-tetrahydrodipicolinate synthase (292 aa).

Threonine 45 contacts pyruvate. The active-site Proton donor/acceptor is tyrosine 133. Lysine 161 acts as the Schiff-base intermediate with substrate in catalysis. Residue isoleucine 203 participates in pyruvate binding.

Belongs to the DapA family. In terms of assembly, homotetramer; dimer of dimers.

The protein resides in the cytoplasm. The enzyme catalyses L-aspartate 4-semialdehyde + pyruvate = (2S,4S)-4-hydroxy-2,3,4,5-tetrahydrodipicolinate + H2O + H(+). It functions in the pathway amino-acid biosynthesis; L-lysine biosynthesis via DAP pathway; (S)-tetrahydrodipicolinate from L-aspartate: step 3/4. Catalyzes the condensation of (S)-aspartate-beta-semialdehyde [(S)-ASA] and pyruvate to 4-hydroxy-tetrahydrodipicolinate (HTPA). This chain is 4-hydroxy-tetrahydrodipicolinate synthase, found in Salmonella typhi.